The sequence spans 121 residues: Large ribosomal subunit protein uL18 (121 aa).

This sequence belongs to the universal ribosomal protein uL18 family. In terms of assembly, part of the 50S ribosomal subunit; part of the 5S rRNA/L5/L18/L25 subcomplex. Contacts the 5S and 23S rRNAs.

In terms of biological role, this is one of the proteins that bind and probably mediate the attachment of the 5S RNA into the large ribosomal subunit, where it forms part of the central protuberance. The protein is Large ribosomal subunit protein uL18 of Dehalococcoides mccartyi (strain ATCC BAA-2266 / KCTC 15142 / 195) (Dehalococcoides ethenogenes (strain 195)).